Reading from the N-terminus, the 136-residue chain is Small ribosomal subunit protein uS9 (136 aa).

The tract at residues 96–136 (LSPDNRKPLKTEGHLSRDPRAKERRKYGLKKARKAPQFSKR) is disordered. Positions 98–116 (PDNRKPLKTEGHLSRDPRA) are enriched in basic and acidic residues. Residues 117–136 (KERRKYGLKKARKAPQFSKR) are compositionally biased toward basic residues.

Belongs to the universal ribosomal protein uS9 family.

This Prochlorococcus marinus (strain MIT 9515) protein is Small ribosomal subunit protein uS9.